Consider the following 222-residue polypeptide: Sortase A (222 aa).

Residues 1–7 (MLKKTIA) are Cytoplasmic-facing. The helical transmembrane segment at 8-28 (IIILIIGLLLIFSPFIKNGIV) threads the bilayer. The Extracellular segment spans residues 29-222 (KYMSGHETIE…ELENKYFPSK (194 aa)). H127 acts as the Proton donor/acceptor in catalysis. C188 serves as the catalytic Acyl-thioester intermediate.

The protein belongs to the bacterial sortase family. Class A subfamily.

The protein resides in the cell membrane. Its activity is regulated as follows. Activity is enhanced by Zn(2+) and strongly enhanced by Ca(2+). Inhibited by chalcone, a precursor of several flavonoids, which blocks the SrtA active site. Transpeptidase that anchors surface proteins to the cell wall. Recognizes and modifies its substrate by proteolytic cleavage of a C-terminal sorting signal. Following cleavage, a covalent intermediate is formed via a thioester bond between the sortase and its substrate, which is then transferred and covalently attached to the cell wall. This sortase recognizes a Leu-Pro-x-Thr-Gly (LPXTG) motif, which is cleaved by the sortase between the threonine and glycine residues. Involved in pathogenesis. May regulate the rate of synthesis and/or the stability of a subset of LPXTG proteins. Not involved in cell wall-anchoring of Hbp2 (SvpA) or Hbp1. The polypeptide is Sortase A (Listeria monocytogenes serovar 1/2a (strain ATCC BAA-679 / EGD-e)).